A 586-amino-acid polypeptide reads, in one-letter code: Potassium-transporting ATPase potassium-binding subunit (586 aa).

12 helical membrane passes run 11 to 31, 67 to 87, 136 to 156, 179 to 199, 279 to 299, 306 to 326, 351 to 371, 381 to 401, 403 to 423, 442 to 462, 507 to 527, and 551 to 571; these read LFLV…AKVF, AVAV…ILML, GLAV…IAVI, LYVL…QGVI, VEIF…GVMV, WAIL…LQGV, FGLA…CGAV, LGGM…GGVG, GLYT…LMIG, IITV…AMIT, ILGS…VLAM, and FALW…FPAL.

This sequence belongs to the KdpA family. As to quaternary structure, the system is composed of three essential subunits: KdpA, KdpB and KdpC.

The protein localises to the cell inner membrane. Functionally, part of the high-affinity ATP-driven potassium transport (or Kdp) system, which catalyzes the hydrolysis of ATP coupled with the electrogenic transport of potassium into the cytoplasm. This subunit binds the periplasmic potassium ions and delivers the ions to the membrane domain of KdpB through an intramembrane tunnel. The polypeptide is Potassium-transporting ATPase potassium-binding subunit (Geobacter metallireducens (strain ATCC 53774 / DSM 7210 / GS-15)).